The chain runs to 464 residues: GTPase Der (464 aa).

2 EngA-type G domains span residues 3–166 (PTIA…AVES) and 177–350 (LKMA…QAAT). GTP is bound by residues 9 to 16 (GRPNVGKS), 56 to 60 (DTGGI), 118 to 121 (NKVD), 183 to 190 (GRPNVGKS), 230 to 234 (DTAGV), and 295 to 298 (NKWD). Residues 351–435 (EKYSTSFLTR…PVRIEYRSGD (85 aa)) form the KH-like domain.

The protein belongs to the TRAFAC class TrmE-Era-EngA-EngB-Septin-like GTPase superfamily. EngA (Der) GTPase family. As to quaternary structure, associates with the 50S ribosomal subunit.

Its function is as follows. GTPase that plays an essential role in the late steps of ribosome biogenesis. The chain is GTPase Der from Teredinibacter turnerae (strain ATCC 39867 / T7901).